A 255-amino-acid chain; its full sequence is Small ribosomal subunit protein eS1 (255 aa).

Residues 1 to 18 (MAVGKNKRLSKGKKGLKK) are compositionally biased toward basic residues. The tract at residues 1–28 (MAVGKNKRLSKGKKGLKKRTQDPFSRKD) is disordered. Ala-2 carries the post-translational modification N-acetylalanine; partial. The segment covering 19 to 28 (RTQDPFSRKD) has biased composition (basic and acidic residues).

Belongs to the eukaryotic ribosomal protein eS1 family. Component of the small ribosomal subunit. Mature ribosomes consist of a small (40S) and a large (60S) subunit. The 40S subunit contains about 33 different proteins and 1 molecule of RNA (18S). The 60S subunit contains about 49 different proteins and 3 molecules of RNA (25S, 5.8S and 5S).

The protein resides in the cytoplasm. In Ajellomyces capsulatus (strain G186AR / H82 / ATCC MYA-2454 / RMSCC 2432) (Darling's disease fungus), this protein is Small ribosomal subunit protein eS1.